The primary structure comprises 89 residues: Small ribosomal subunit protein uS19 (89 aa).

Belongs to the universal ribosomal protein uS19 family.

Protein S19 forms a complex with S13 that binds strongly to the 16S ribosomal RNA. The protein is Small ribosomal subunit protein uS19 of Bacteroides thetaiotaomicron (strain ATCC 29148 / DSM 2079 / JCM 5827 / CCUG 10774 / NCTC 10582 / VPI-5482 / E50).